The primary structure comprises 381 residues: Cytochrome b (381 aa).

A run of 4 helical transmembrane segments spans residues 34–54 (FGSL…FLAM), 78–99 (WLIR…YLHI), 114–134 (WNIG…GYVL), and 179–199 (FFAF…LHFL). Residues H84 and H98 each contribute to the heme b site. Residues H183 and H197 each contribute to the heme b site. A ubiquinone is bound at residue H202. 4 consecutive transmembrane segments (helical) span residues 227-247 (YKDI…VLFL), 289-309 (LGGV…PFLH), 321-341 (LTQL…WIGG), and 348-368 (FIFI…IITP).

Belongs to the cytochrome b family. The cytochrome bc1 complex contains 3 respiratory subunits (MT-CYB, CYC1 and UQCRFS1), 2 core proteins (UQCRC1 and UQCRC2) and probably 6 low-molecular weight proteins. Heme b serves as cofactor.

It is found in the mitochondrion inner membrane. Functionally, component of the ubiquinol-cytochrome c reductase complex (complex III or cytochrome b-c1 complex) that is part of the mitochondrial respiratory chain. The b-c1 complex mediates electron transfer from ubiquinol to cytochrome c. Contributes to the generation of a proton gradient across the mitochondrial membrane that is then used for ATP synthesis. This is Cytochrome b (mt-cyb) from Heterodontus francisci (Horn shark).